The sequence spans 118 residues: Putative pterin-4-alpha-carbinolamine dehydratase (118 aa).

This sequence belongs to the pterin-4-alpha-carbinolamine dehydratase family.

It catalyses the reaction (4aS,6R)-4a-hydroxy-L-erythro-5,6,7,8-tetrahydrobiopterin = (6R)-L-erythro-6,7-dihydrobiopterin + H2O. The polypeptide is Putative pterin-4-alpha-carbinolamine dehydratase (phhB) (Xanthomonas axonopodis pv. citri (strain 306)).